A 430-amino-acid polypeptide reads, in one-letter code: Immunoglobulin heavy constant delta (430 aa).

The Extracellular portion of the chain corresponds to 1 to 406 (APTKAPDVFP…FDDVGSLWTT (406 aa)). The region spanning 6-98 (PDVFPIISGC…TASKSKKEIF (93 aa)) is the Ig-like 1 domain. A disulfide bridge connects residues cysteine 28 and cysteine 84. A disordered region spans residues 96–167 (EIFRWPESPK…TPECPSHTQP (72 aa)). The segment covering 106–118 (AQASSVPTAQPQA) has biased composition (polar residues). O-linked (GalNAc...) serine glycans are attached at residues serine 109 and serine 110. 5 O-linked (GalNAc...) threonine glycosylation sites follow: threonine 113, threonine 126, threonine 127, threonine 131, and threonine 132. Residues 138–158 (GGEEKKKEKEKEEQEERETKT) show a composition bias toward basic and acidic residues. Ig-like domains are found at residues 175–263 (PAVQ…RLMA) and 267–373 (PAAQ…RSLE). Disulfide bonds link cysteine 190-cysteine 249 and cysteine 294-cysteine 355. N-linked (GlcNAc...) asparagine glycosylation is found at asparagine 225, asparagine 316, and asparagine 367. Residues 407 to 427 (LSTFVALFILTLLYSGIVTFI) form a helical membrane-spanning segment. Residues 428–430 (KVK) lie on the Cytoplasmic side of the membrane.

Immunoglobulins are composed of two identical heavy chains and two identical light chains; disulfide-linked. An IgD molecule contains thus a delta heavy chain combined with either a kappa or a lambda light chains. Kappa light chains are found predominantly on the membrane IgD (mIgD) form and lambda on the secreted IgD (sIgD) form, this fact is poorly understood. Membrane-bound IgD molecules are non-covalently associated with a heterodimer of CD79A and CD79B.

Its subcellular location is the secreted. The protein resides in the cell membrane. In terms of biological role, constant region of immunoglobulin heavy chains. Immunoglobulins, also known as antibodies, are membrane-bound or secreted glycoproteins produced by B lymphocytes. In the recognition phase of humoral immunity, the membrane-bound immunoglobulins serve as receptors which, upon binding of a specific antigen, trigger the clonal expansion and differentiation of B lymphocytes into immunoglobulins-secreting plasma cells. Secreted immunoglobulins mediate the effector phase of humoral immunity, which results in the elimination of bound antigens. The antigen binding site is formed by the variable domain of one heavy chain, together with that of its associated light chain. Thus, each immunoglobulin has two antigen binding sites with remarkable affinity for a particular antigen. The variable domains are assembled by a process called V-(D)-J rearrangement and can then be subjected to somatic hypermutations which, after exposure to antigen and selection, allow affinity maturation for a particular antigen. IgD is the major antigen receptor isotype on the surface of most peripheral B-cells, where it is coexpressed with IgM. The membrane-bound IgD (mIgD) induces the phosphorylation of CD79A and CD79B by the Src family of protein tyrosine kinases. Soluble IgD (sIgD) concentration in serum below those of IgG, IgA, and IgM but much higher than that of IgE. IgM and IgD molecules present on B cells have identical V regions and antigen-binding sites. After the antigen binds to the B-cell receptor, the secreted form sIgD is shut off. IgD is a potent inducer of TNF, IL1B, and IL1RN. IgD also induces release of IL6, IL10, and LIF from peripheral blood mononuclear cells. Monocytes seem to be the main producers of cytokines in vitro in the presence of IgD. This is Immunoglobulin heavy constant delta from Homo sapiens (Human).